Consider the following 1002-residue polypeptide: Protein SMAX1-LIKE 7 (1002 aa).

Residues 8–185 (ARQCLTEETA…DVLHPPVTSQ (178 aa)) form the Clp R domain. Repeat stretches follow at residues 12-86 (LTEE…LDRL) and 103-185 (VSNS…VTSQ). An EAR motif is present at residues 854 to 858 (LDLNL).

It belongs to the ClpA/ClpB family. Interacts with TPL/TPR in an EAR-motif dependent manner. Interacts with TPL, TPR1, TPR2 and TPR4. Interacts with MAX2 and TPR2. Interacts with D14. The interaction with D14 occurs in the presence of (2'R) stereoisomers of strigolactones, but not (2'S) stereoisomers. Ubiquitinated upon strigolactone treatment. Strigolactone, but not karrikin, triggers rapid SCF(MAX2)-dependent degradation. As to expression, expressed in axillary branches and roots. Detected in seedlings and leaves. Expressed in the primary rosette buds and expanding leaves of adult rosettes, the vasculature of the hypocotyls, cotyledons, and mature roots, and in the midvein and petioles of young leaves.

Its subcellular location is the nucleus. Functionally, probable component of a transcriptional corepressor complex involved in branching control. Regulates cotyledon expansion and lateral root growth, but not germination or hypocotyl elongation. Promotes auxin transport and PIN1 accumulation in the stem and represses BRC1/TCP18 expression in axillary buds. This Arabidopsis thaliana (Mouse-ear cress) protein is Protein SMAX1-LIKE 7.